We begin with the raw amino-acid sequence, 561 residues long: Potassium-transporting ATPase potassium-binding subunit (561 aa).

12 consecutive transmembrane segments (helical) span residues 2–22 (GQGL…TPVL), 66–86 (IRAI…LIYF), 135–155 (ALGF…IAFI), 177–197 (ILLP…VPQT), 253–273 (LIET…YGVF), 280–300 (AWLL…VAAG), 327–347 (FGWA…CGAV), 354–374 (LMPQ…IWGG), 378–398 (GTAY…LMVG), 413–433 (IVLA…PSAI), 482–502 (LSTS…MLLL), and 531–551 (AGIV…LGPI).

This sequence belongs to the KdpA family. As to quaternary structure, the system is composed of three essential subunits: KdpA, KdpB and KdpC.

The protein localises to the cell inner membrane. Functionally, part of the high-affinity ATP-driven potassium transport (or Kdp) system, which catalyzes the hydrolysis of ATP coupled with the electrogenic transport of potassium into the cytoplasm. This subunit binds the periplasmic potassium ions and delivers the ions to the membrane domain of KdpB through an intramembrane tunnel. The protein is Potassium-transporting ATPase potassium-binding subunit of Nostoc sp. (strain PCC 7120 / SAG 25.82 / UTEX 2576).